The chain runs to 155 residues: Vasotocin-neurophysin VT 1 (155 aa).

A signal peptide spans 1-20; sequence MPDSTIPLLCVLGLLALSSA. C21 and C26 are oxidised to a cystine. The residue at position 29 (G29) is a Glycine amide. 7 cysteine pairs are disulfide-bonded: C41–C85, C44–C58, C52–C75, C59–C65, C92–C105, C99–C117, and C106–C111.

This sequence belongs to the vasopressin/oxytocin family. In terms of processing, seven disulfide bonds are present in neurophysin.

The protein localises to the secreted. In terms of biological role, vasotocin is probably an antidiuretic hormone. The sequence is that of Vasotocin-neurophysin VT 1 from Oncorhynchus masou (Cherry salmon).